Here is a 143-residue protein sequence, read N- to C-terminus: FAD synthase (143 aa).

Residues 9-10, 14-17, and D92 each bind ATP; these read TF and HPGH.

The protein belongs to the archaeal FAD synthase family. Homodimer. The cofactor is a divalent metal cation.

It carries out the reaction FMN + ATP + H(+) = FAD + diphosphate. The protein operates within cofactor biosynthesis; FAD biosynthesis; FAD from FMN: step 1/1. In terms of biological role, catalyzes the transfer of the AMP portion of ATP to flavin mononucleotide (FMN) to produce flavin adenine dinucleotide (FAD) coenzyme. The polypeptide is FAD synthase (Methanococcoides burtonii (strain DSM 6242 / NBRC 107633 / OCM 468 / ACE-M)).